The primary structure comprises 332 residues: Phosphoribosylformylglycinamidine cyclo-ligase (332 aa).

The protein belongs to the AIR synthase family.

It is found in the cytoplasm. It carries out the reaction 2-formamido-N(1)-(5-O-phospho-beta-D-ribosyl)acetamidine + ATP = 5-amino-1-(5-phospho-beta-D-ribosyl)imidazole + ADP + phosphate + H(+). The protein operates within purine metabolism; IMP biosynthesis via de novo pathway; 5-amino-1-(5-phospho-D-ribosyl)imidazole from N(2)-formyl-N(1)-(5-phospho-D-ribosyl)glycinamide: step 2/2. The polypeptide is Phosphoribosylformylglycinamidine cyclo-ligase (Clostridium acetobutylicum (strain ATCC 824 / DSM 792 / JCM 1419 / IAM 19013 / LMG 5710 / NBRC 13948 / NRRL B-527 / VKM B-1787 / 2291 / W)).